Reading from the N-terminus, the 106-residue chain is UPF0145 protein Cthe_0398 (106 aa).

This sequence belongs to the UPF0145 family.

This Acetivibrio thermocellus (strain ATCC 27405 / DSM 1237 / JCM 9322 / NBRC 103400 / NCIMB 10682 / NRRL B-4536 / VPI 7372) (Clostridium thermocellum) protein is UPF0145 protein Cthe_0398.